An 85-amino-acid chain; its full sequence is MEKLTVLILVAIVLLTIQVLGQSDRDKHPKRRPRQYATKRLSALMKGHRQCTGAGFECEETPECCPNLTCKCSGSPLCTRYRCKT.

Positions 1–23 (MEKLTVLILVAIVLLTIQVLGQS) are cleaved as a signal peptide. Residues 24 to 49 (DRDKHPKRRPRQYATKRLSALMKGHR) constitute a propeptide that is removed on maturation. Pyrrolidone carboxylic acid is present on Gln-50.

It belongs to the conotoxin O2 superfamily. Post-translationally, contains 4 disulfide bonds. In terms of tissue distribution, expressed by the venom duct.

Its subcellular location is the secreted. The protein is Conotoxin Mi15b of Conus miles (Soldier cone).